Reading from the N-terminus, the 345-residue chain is N-acetyl-gamma-glutamyl-phosphate reductase (345 aa).

Residue C149 is part of the active site.

It belongs to the NAGSA dehydrogenase family. Type 1 subfamily.

The protein localises to the cytoplasm. The enzyme catalyses N-acetyl-L-glutamate 5-semialdehyde + phosphate + NADP(+) = N-acetyl-L-glutamyl 5-phosphate + NADPH + H(+). It participates in amino-acid biosynthesis; L-arginine biosynthesis; N(2)-acetyl-L-ornithine from L-glutamate: step 3/4. Catalyzes the NADPH-dependent reduction of N-acetyl-5-glutamyl phosphate to yield N-acetyl-L-glutamate 5-semialdehyde. The polypeptide is N-acetyl-gamma-glutamyl-phosphate reductase (Bacillus thuringiensis subsp. konkukian (strain 97-27)).